Consider the following 171-residue polypeptide: Calcium-binding protein F-like (171 aa).

EF-hand domains are found at residues 6-41 (KIFE…KMNG), 57-80 (IDMD…KAKK), 89-124 (AALA…RGYT), and 130-159 (DQYL…RRID). Residues aspartate 19, asparagine 21, aspartate 23, serine 25, and aspartate 30 each contribute to the Ca(2+) site. Ca(2+) contacts are provided by aspartate 102, aspartate 104, aspartate 106, lysine 108, glutamate 113, aspartate 137, aspartate 139, aspartate 141, cysteine 143, and glutamate 148.

The protein is Calcium-binding protein F-like (cbp12) of Dictyostelium discoideum (Social amoeba).